The chain runs to 131 residues: Transcription antitermination protein NusB (131 aa).

It belongs to the NusB family.

In terms of biological role, involved in transcription antitermination. Required for transcription of ribosomal RNA (rRNA) genes. Binds specifically to the boxA antiterminator sequence of the ribosomal RNA (rrn) operons. The protein is Transcription antitermination protein NusB of Aliarcobacter butzleri (strain RM4018) (Arcobacter butzleri).